We begin with the raw amino-acid sequence, 379 residues long: Dihydroorotate dehydrogenase (quinone) (379 aa).

FMN is bound by residues 79-83 (AGCDK) and Ala103. Lys83 provides a ligand contact to substrate. 128 to 131 (NRLG) is a binding site for substrate. Positions 160 and 193 each coordinate FMN. Asn193 lines the substrate pocket. The active-site Nucleophile is the Ser196. Asn198 provides a ligand contact to substrate. Residues Lys231 and Thr259 each contribute to the FMN site. 260 to 261 (NT) serves as a coordination point for substrate. FMN-binding positions include Gly289, Gly318, and 339 to 340 (YT).

The protein belongs to the dihydroorotate dehydrogenase family. Type 2 subfamily. As to quaternary structure, monomer. FMN serves as cofactor.

Its subcellular location is the cell membrane. The catalysed reaction is (S)-dihydroorotate + a quinone = orotate + a quinol. It participates in pyrimidine metabolism; UMP biosynthesis via de novo pathway; orotate from (S)-dihydroorotate (quinone route): step 1/1. Functionally, catalyzes the conversion of dihydroorotate to orotate with quinone as electron acceptor. The protein is Dihydroorotate dehydrogenase (quinone) of Crocosphaera subtropica (strain ATCC 51142 / BH68) (Cyanothece sp. (strain ATCC 51142)).